Consider the following 248-residue polypeptide: UDP-2,3-diacylglucosamine hydrolase (248 aa).

Residues aspartate 8, histidine 10, aspartate 41, asparagine 79, and histidine 114 each contribute to the Mn(2+) site. 79–80 (NR) is a binding site for substrate. Substrate contacts are provided by aspartate 122, serine 160, aspartate 171, and histidine 202. The Mn(2+) site is built by histidine 202 and histidine 204.

It belongs to the LpxH family. Requires Mn(2+) as cofactor.

The protein resides in the cell inner membrane. The enzyme catalyses UDP-2-N,3-O-bis[(3R)-3-hydroxytetradecanoyl]-alpha-D-glucosamine + H2O = 2-N,3-O-bis[(3R)-3-hydroxytetradecanoyl]-alpha-D-glucosaminyl 1-phosphate + UMP + 2 H(+). It functions in the pathway glycolipid biosynthesis; lipid IV(A) biosynthesis; lipid IV(A) from (3R)-3-hydroxytetradecanoyl-[acyl-carrier-protein] and UDP-N-acetyl-alpha-D-glucosamine: step 4/6. Hydrolyzes the pyrophosphate bond of UDP-2,3-diacylglucosamine to yield 2,3-diacylglucosamine 1-phosphate (lipid X) and UMP by catalyzing the attack of water at the alpha-P atom. Involved in the biosynthesis of lipid A, a phosphorylated glycolipid that anchors the lipopolysaccharide to the outer membrane of the cell. The sequence is that of UDP-2,3-diacylglucosamine hydrolase from Stenotrophomonas maltophilia (strain R551-3).